We begin with the raw amino-acid sequence, 230 residues long: MLFIRMLRRAGQSPACGCWTPVLPVRFLGISPRQIPADANFHSASFSDTDHPRVLITGALGQLGVGLANLLRKRFGKDSVILSDIRKPPDHVFHSGPFIYSDILDYKNLREIVVNNRITWLFHYSALLSAFGEANVSLARAVNITGLHNILDVAAEHNLQLFVPSTIGAFGPTSPRNPTPDLCIQRPRTIYGVSKVHAELMGETMQSRFSMMPQSMANSSATWKPARDCP.

It belongs to the NAD(P)-dependent epimerase/dehydratase family. Expressed in all tissues examined. Detected in most cell types examined, but not observed in endothelial cells, glioma cell lines and some leukemia cell lines.

It is found in the mitochondrion. In Homo sapiens (Human), this protein is Inactive L-threonine 3-dehydrogenase, mitochondrial.